The following is a 784-amino-acid chain: DNA ligase (784 aa).

NAD(+) is bound by residues 35-39 (DAEYD), 84-85 (SL), and E117. The N6-AMP-lysine intermediate role is filled by K119. R140, E177, K294, and K318 together coordinate NAD(+). Zn(2+) is bound by residues C412, C415, C442, and C448. Positions 703–784 (AEGLPLAGQT…FLALLRQLES (82 aa)) constitute a BRCT domain.

Belongs to the NAD-dependent DNA ligase family. LigA subfamily. Requires Mg(2+) as cofactor. The cofactor is Mn(2+).

It catalyses the reaction NAD(+) + (deoxyribonucleotide)n-3'-hydroxyl + 5'-phospho-(deoxyribonucleotide)m = (deoxyribonucleotide)n+m + AMP + beta-nicotinamide D-nucleotide.. DNA ligase that catalyzes the formation of phosphodiester linkages between 5'-phosphoryl and 3'-hydroxyl groups in double-stranded DNA using NAD as a coenzyme and as the energy source for the reaction. It is essential for DNA replication and repair of damaged DNA. This is DNA ligase from Azotobacter vinelandii (strain DJ / ATCC BAA-1303).